A 175-amino-acid chain; its full sequence is ATP synthase subunit b, chloroplastic (175 aa).

Residues 26-44 (VINLAVVIGVVVSFVGDAV) form a helical membrane-spanning segment.

Belongs to the ATPase B chain family. In terms of assembly, F-type ATPases have 2 components, F(1) - the catalytic core - and F(0) - the membrane proton channel. F(1) has five subunits: alpha(3), beta(3), gamma(1), delta(1), epsilon(1). F(0) has four main subunits: a(1), b(1), b'(1) and c(10-14). The alpha and beta chains form an alternating ring which encloses part of the gamma chain. F(1) is attached to F(0) by a central stalk formed by the gamma and epsilon chains, while a peripheral stalk is formed by the delta, b and b' chains.

The protein localises to the plastid. It is found in the chloroplast thylakoid membrane. In terms of biological role, f(1)F(0) ATP synthase produces ATP from ADP in the presence of a proton or sodium gradient. F-type ATPases consist of two structural domains, F(1) containing the extramembraneous catalytic core and F(0) containing the membrane proton channel, linked together by a central stalk and a peripheral stalk. During catalysis, ATP synthesis in the catalytic domain of F(1) is coupled via a rotary mechanism of the central stalk subunits to proton translocation. Component of the F(0) channel, it forms part of the peripheral stalk, linking F(1) to F(0). The protein is ATP synthase subunit b, chloroplastic of Tupiella akineta (Green alga).